The chain runs to 754 residues: ToMV resistance protein Tm-1(GCR237) (754 aa).

The interval 1–201 (MATAQSNSPR…AGMVIGRLES (201 aa)) is N-terminal inhibitory domain NN. ATP contacts are provided by residues 18 to 20 (DTK), T55, R92, and 124 to 127 (GSGG). The interval 211–431 (KFTVGVTMFG…VDSFLEISPK (221 aa)) is N-terminal inhibitory domain NC.

The protein belongs to the UPF0261 family. In terms of assembly, homodimer. As to quaternary structure, (Microbial infection) Binds, via an ATP bridge, to the tobamoviruses avirulent (Avr) replication proteins (large and small subunits, e.g. tomato mosaic virus (ToMV/TMV) AC P03587, tobacco mild green mosaic virus (TMGMV) AC P18339 and pepper mild mottle virus (PMMoV) AC P89657) to inhibit their function after the translation of tobamoviruses RNA, but before the viral replication complex formation on the membrane surfaces; this interaction is not possible with resistance-breaking strains replication proteins.

In terms of biological role, inhibitor of viral RNA replication which confers resistance to some tobamoviruses including tomato mosaic virus (ToMV) (e.g. isolate L), tobacco mosaic virus (TMV), tobacco mild green mosaic virus (TMGMV) and pepper mild mottle virus (PMMoV), but not to resistance-breaking isolates of ToMV (e.g. LT1, SL-1 and ToMV1-2) and tomato brown rugose fruit virus (ToBRFV). Prevents tobamoviruses RNA replication by affecting the association of tobamoviruses replication proteins (large and small subunits) with host membrane-associated proteins (e.g. TOM1, TOM2A and ARL8), thus inhibiting the replication complex formation on the membranes and avoiding viral negative-strand RNA synthesis. Inhibits triphosphatase activity of ToMV replication proteins. The protein is ToMV resistance protein Tm-1(GCR237) of Solanum lycopersicum (Tomato).